The sequence spans 414 residues: Putative ankyrin repeat protein BB_B28 (414 aa).

ANK repeat units follow at residues 326–355 (NGNP…NINL) and 359–389 (NSQT…NPNI).

The protein is Putative ankyrin repeat protein BB_B28 of Borreliella burgdorferi (strain ATCC 35210 / DSM 4680 / CIP 102532 / B31) (Borrelia burgdorferi).